We begin with the raw amino-acid sequence, 443 residues long: Ribosomal protein uS12 methylthiotransferase RimO (443 aa).

Residues 6–116 form the MTTase N-terminal domain; it reads PRVGMISLGC…VVNAVHDVVP (111 aa). Positions 15, 51, 80, 149, 153, and 156 each coordinate [4Fe-4S] cluster. Residues 135–373 form the Radical SAM core domain; that stretch reads LTPRHYAYLK…MAHQQAISAA (239 aa). The TRAM domain maps to 376 to 443; the sequence is QMKIGKEIEV…DEYDLWAEML (68 aa).

This sequence belongs to the methylthiotransferase family. RimO subfamily. Requires [4Fe-4S] cluster as cofactor.

It localises to the cytoplasm. The enzyme catalyses L-aspartate(89)-[ribosomal protein uS12]-hydrogen + (sulfur carrier)-SH + AH2 + 2 S-adenosyl-L-methionine = 3-methylsulfanyl-L-aspartate(89)-[ribosomal protein uS12]-hydrogen + (sulfur carrier)-H + 5'-deoxyadenosine + L-methionine + A + S-adenosyl-L-homocysteine + 2 H(+). In terms of biological role, catalyzes the methylthiolation of an aspartic acid residue of ribosomal protein uS12. This is Ribosomal protein uS12 methylthiotransferase RimO from Pseudomonas syringae pv. tomato (strain ATCC BAA-871 / DC3000).